The primary structure comprises 440 residues: Chromosomal replication initiator protein DnaA (440 aa).

The tract at residues 1–69 (MKERILQEIK…VKVVLGNDAT (69 aa)) is domain I, interacts with DnaA modulators. A domain II region spans residues 69–96 (TFEITYEAFEPHSSYSEPLVKKRAVLLT). A domain III, AAA+ region region spans residues 97 to 313 (PLNPDYTFEN…GAIIKLLVYK (217 aa)). Residues G140, G142, K143, and T144 each coordinate ATP. The domain IV, binds dsDNA stretch occupies residues 314–440 (ETTGKEVDLK…GEISRRALSG (127 aa)).

The protein belongs to the DnaA family. In terms of assembly, oligomerizes as a right-handed, spiral filament on DNA at oriC.

Its subcellular location is the cytoplasm. Its function is as follows. Plays an essential role in the initiation and regulation of chromosomal replication. ATP-DnaA binds to the origin of replication (oriC) to initiate formation of the DNA replication initiation complex once per cell cycle. Binds the DnaA box (a 9 base pair repeat at the origin) and separates the double-stranded (ds)DNA. Forms a right-handed helical filament on oriC DNA; dsDNA binds to the exterior of the filament while single-stranded (ss)DNA is stabiized in the filament's interior. The ATP-DnaA-oriC complex binds and stabilizes one strand of the AT-rich DNA unwinding element (DUE), permitting loading of DNA polymerase. After initiation quickly degrades to an ADP-DnaA complex that is not apt for DNA replication. Binds acidic phospholipids. The sequence is that of Chromosomal replication initiator protein DnaA from Thermotoga sp. (strain RQ2).